A 107-amino-acid polypeptide reads, in one-letter code: U20-lycotoxin-Ls1b (107 aa).

The signal sequence occupies residues 1–30 (MFSTSDQVSKMNSRILSALLILGIATCVIA). The region spanning 31–76 (GGFCPKSRHPQCNLSYKINDCCAQSDCRVGSVCCVEGCGNVCRAES) is the WAP domain. Disulfide bonds link Cys-34-Cys-64, Cys-42-Cys-68, Cys-51-Cys-63, Cys-52-Cys-90, and Cys-57-Cys-72.

It belongs to the venom protein 11 family. 02 (wap-2) subfamily. In terms of processing, contains 5 disulfide bonds. As to expression, expressed by the venom gland.

Its subcellular location is the secreted. Functionally, has antibacterial activity. The protein is U20-lycotoxin-Ls1b of Lycosa singoriensis (Wolf spider).